A 276-amino-acid polypeptide reads, in one-letter code: Undecaprenyl-diphosphatase 2 (276 aa).

The next 8 membrane-spanning stretches (helical) occupy residues 1–21, 44–64, 87–107, 114–134, 150–170, 190–210, 220–240, and 251–271; these read MSLW…LFPV, QLLP…LWYF, GHLM…GLLL, VFHD…LLWV, MTFK…IPGF, AAEF…VLEL, LMDA…SVRF, and LASF…WFML.

Belongs to the UppP family.

The protein localises to the cell inner membrane. It carries out the reaction di-trans,octa-cis-undecaprenyl diphosphate + H2O = di-trans,octa-cis-undecaprenyl phosphate + phosphate + H(+). Its function is as follows. Catalyzes the dephosphorylation of undecaprenyl diphosphate (UPP). Confers resistance to bacitracin. The protein is Undecaprenyl-diphosphatase 2 of Burkholderia ambifaria (strain ATCC BAA-244 / DSM 16087 / CCUG 44356 / LMG 19182 / AMMD) (Burkholderia cepacia (strain AMMD)).